The sequence spans 1067 residues: Probable importin-5 homolog (1067 aa).

24 HEAT repeats span residues 3-34, 42-75, 93-120, 125-152, 164-197, 206-243, 251-286, 295-347, 349-381, 385-425, 427-466, 468-508, 510-553, 555-596, 598-658, 661-703, 718-757, 763-826, 832-869, 876-909, 917-960, 969-999, 1008-1040, and 1041-1064; these read LQPITDLLKALNSGNTTTIQQAEQLYADYKNH, SFIVLIRTSQDELLRSYPPVLLRTLVNGNDSGNI, FAVREEPKNHIRHSILNVIAILAIQLVP, PEILSFIIESSSSPEENLRESSFYLIGA, APHFDKFALLVEKGLNDPSAKVQVSALETVSTFI, VFKPLIPAMLNTIQKTIESNLEKEAQKGILTFIIIAQY, NFDMIFKVFFQFLEHQSLEDETKHACLHFFLTFAEF, LYLE…HCVS, GLWEFFLQCAPTLLNSGNWKERYTGLMTLSSIS, EKQI…ASYL, REMQDLYKTLIPVSLEHLNDPFPRVTISNCEFLTLFLDEI, PNRV…VDGI, EEFT…GLAV, KKVF…AQCL, EDFI…AMEL, HLFP…SKQH, FTSRLFLDSYERMAASIKTESEPDTLSAKLKALSDLMDIG, ADRI…CIQF, PYIATVLPAMIELIETAPSVEIKTSMICILDDLIENGG, YPHIIKPMMNCTLPNLDPSLIQSAVFGIGLAAEN, FLME…ITNL, PQTIALWLSYLPIQDDGEAGSIIKSLCTLIR, QQYIVKVLEIIAVGLHKKAVNPDDKQIISLALR, and SQESLVAQSLFQLSAENQAILANF.

It belongs to the importin beta family. Importin beta-3 subfamily.

The protein resides in the cytoplasm. It is found in the nucleus. In terms of biological role, functions in nuclear protein import as nuclear transport receptor. Serves as receptor for nuclear localization signals (NLS) in cargo substrates. This is Probable importin-5 homolog from Dictyostelium discoideum (Social amoeba).